We begin with the raw amino-acid sequence, 297 residues long: Nucleotide-binding protein Bsph_0448 (297 aa).

19-26 is an ATP binding site; sequence GMSGAGKT. A GTP-binding site is contributed by 70-73; sequence DMRG.

The protein belongs to the RapZ-like family.

Functionally, displays ATPase and GTPase activities. This Lysinibacillus sphaericus (strain C3-41) protein is Nucleotide-binding protein Bsph_0448.